The following is a 262-amino-acid chain: Polyamine aminopropyltransferase (262 aa).

The PABS domain occupies 1 to 249; the sequence is MWITQEITPY…DIHRAAFALP (249 aa). Position 29 (asparagine 29) interacts with S-methyl-5'-thioadenosine. Residue aspartate 83 participates in spermidine binding. Aspartate 155 acts as the Proton acceptor in catalysis.

It belongs to the spermidine/spermine synthase family. As to quaternary structure, homodimer or homotetramer.

It is found in the cytoplasm. The enzyme catalyses S-adenosyl 3-(methylsulfanyl)propylamine + putrescine = S-methyl-5'-thioadenosine + spermidine + H(+). It participates in amine and polyamine biosynthesis; spermidine biosynthesis; spermidine from putrescine: step 1/1. In terms of biological role, catalyzes the irreversible transfer of a propylamine group from the amino donor S-adenosylmethioninamine (decarboxy-AdoMet) to putrescine (1,4-diaminobutane) to yield spermidine. This is Polyamine aminopropyltransferase from Helicobacter acinonychis (strain Sheeba).